The sequence spans 137 residues: Hydrogenase-4 component J (137 aa).

The protein to E.coli HycH.

Possible component of hydrogenase 4. In Escherichia coli (strain K12), this protein is Hydrogenase-4 component J.